We begin with the raw amino-acid sequence, 449 residues long: MNRFFRENNIFDAPRTGGKGRAKSLPAPAANSPPSPVRPPPKSNIKPPTRISPPKQPMCTSPAKPLEHSSIVSKKPVVNRKDGYFVPPEFGNKFEGLPAYSDKLDFKQERDLRMHFMSDLERDIMKATLKFSTNYIMGYINSKDMRMTGKFASRPVKYKKTMEHMSDSRCTTCNYRFKDNTREWFLYVVVHIEKPLDDPDRIDICCQKCYLYHNVPKTSYEIYPSINLVDLSYLARERFFYQYIFPVSLEHTTEVKELRIDDHNCKVFEIIRRIIRNHKEPNERIQTIDLSTTGGLVLRETYTNIVLQRYRSMCTRPDVVDDVNCFILQEPSEMMAALQDNRFSGIKGTVFATVKVKKFTQVLDGAITFPLKPTTNNYCKLCKKTKLYYKNPVLYCTKCGFTNVYHFPEYSKFMYYFEAIKSFEMHNEMIIYYDLKMYKKLINIVNNNV.

A disordered region spans residues 1–68 (MNRFFRENNI…CTSPAKPLEH (68 aa)). Pro residues predominate over residues 31-42 (NSPPSPVRPPPK). A C4-type zinc finger spans residues 379-399 (CKLCKKTKLYYKNPVLYCTKC).

Its subcellular location is the virion. It is found in the host cytoplasm. The protein resides in the host nucleus. It localises to the host cell membrane. Its function is as follows. May act as a packaging protein or as a structural component associated with intranuclear baculovirus virion assembly. This is Early 53 kDa protein (ME53) from Autographa californica nuclear polyhedrosis virus (AcMNPV).